A 68-amino-acid chain; its full sequence is MDARLLEILVCPICKGPLHYDRGAQELVCHADKLAYPIRDGIPVMLVDEARQTVEGTPVDPAGPARGR.

This sequence belongs to the UPF0434 family.

The polypeptide is UPF0434 protein BMA10229_A1047 (Burkholderia mallei (strain NCTC 10229)).